Here is a 544-residue protein sequence, read N- to C-terminus: Methionine--tRNA ligase (544 aa).

The 'HIGH' region motif lies at 10-20 (PYANGSLHLGH). Residues cysteine 141, cysteine 144, cysteine 153, and cysteine 156 each coordinate Zn(2+). The 'KMSKS' region signature appears at 329–333 (KLSTS). Threonine 332 lines the ATP pocket.

The protein belongs to the class-I aminoacyl-tRNA synthetase family. MetG type 1 subfamily. Monomer. It depends on Zn(2+) as a cofactor.

It is found in the cytoplasm. It catalyses the reaction tRNA(Met) + L-methionine + ATP = L-methionyl-tRNA(Met) + AMP + diphosphate. Its function is as follows. Is required not only for elongation of protein synthesis but also for the initiation of all mRNA translation through initiator tRNA(fMet) aminoacylation. In Bacillus cereus (strain B4264), this protein is Methionine--tRNA ligase.